The following is an 869-amino-acid chain: Sodium-dependent phosphate transporter (869 aa).

Over 1–18 (MEAVAELSAPSLAGAPGE) the chain is Extracellular. The helical transmembrane segment at 19–39 (YTWIVAVAGVTCFLTAFAIGA) threads the bilayer. At 40–54 (NDVANTFSSSVGSRA) the chain is on the cytoplasmic side. Residues 55 to 75 (IPLWAAIGMSAVLETVGATLL) traverse the membrane as a helical segment. The Extracellular segment spans residues 76 to 97 (GGAVTDSIRSKIIDFEVFRETP). Residues 98–118 (SILMTGMLCALVGAGLWLFLA) traverse the membrane as a helical segment. The Cytoplasmic segment spans residues 119–120 (NH). Residues 121-141 (LGLPVSTTHSIIGALLGFGLA) traverse the membrane as a helical segment. Residues 142–154 (SGNVRAVKWTQVA) are Extracellular-facing. A helical transmembrane segment spans residues 155–175 (FIVGSWVAAPLAASAAGATIF). Residues 176-196 (VCMRRLILRSRQPLRRAKRFL) lie on the Cytoplasmic side of the membrane. A helical membrane pass occupies residues 197–217 (WIFIYLITLTFSVFLVFKNFF). Residues 218-250 (ELNVSCDQMVAGGRVEHFEPCRISRWADAHSGT) lie on the Extracellular side of the membrane. The helical transmembrane segment at 251-271 (ALGIAVALSVALTFVISCLVY) threads the bilayer. Over 272-720 (RFAFYRVESY…SGSADSEIGS (449 aa)) the chain is Cytoplasmic. 3 disordered regions span residues 286–312 (KRSSRTEPRDASEEGTGPSHARPGGLL), 374–401 (AAAAKPDVGTAAQSPESRFAADPVGSSV), and 453–571 (SAFL…KRER). Residues 457-481 (SSPSSSVPPSSPSPSSTPSSPSASP) are compositionally biased toward low complexity. The span at 482–491 (RRPPSRPPVP) shows a compositional bias: pro residues. Residues 492-509 (RTCSPAPVSPSVPRAFAS) are compositionally biased toward low complexity. Positions 556–571 (PHPERRDEVPAAKRER) are enriched in basic and acidic residues. Residues 721–741 (PWYILLFGGLSMSLGLALLGY) traverse the membrane as a helical segment. At 742–759 (RVIKTVGVKLVKITPARG) the chain is on the extracellular side. A helical membrane pass occupies residues 760–780 (FSMELGAAWTVLIFSAIGIPL). Over 781–837 (STTHCAVGSTVGVGLMEPKHPRRETGDGPVAEGEEPKKRAVQCPVINTASVNWKLFG) the chain is Cytoplasmic. The chain crosses the membrane as a helical span at residues 838 to 858 (GVFVSWIITIAFSALVTAALF). The Extracellular portion of the chain corresponds to 859 to 869 (SFAAYSPRMVS).

It belongs to the inorganic phosphate transporter (PiT) (TC 2.A.20) family.

It localises to the cell membrane. It is found in the vacuole membrane. The protein localises to the cytoplasmic vesicle membrane. It catalyses the reaction 2 Na(+)(out) + phosphate(out) = 2 Na(+)(in) + phosphate(in). Its function is as follows. Sodium-phosphate symporter which preferentially transports the monovalent form of phosphate with a stoichiometry of two sodium ions per phosphate ion. Plays a role in stabilizing the cytosolic pH and osmoregulation. May be required for optimal virulence of parasites in vivo. This chain is Sodium-dependent phosphate transporter, found in Toxoplasma gondii (strain ATCC 50861 / VEG).